The following is a 583-amino-acid chain: Protein disulfide-isomerase-like protein of the testis (583 aa).

An N-terminal signal peptide occupies residues methionine 1 to alanine 17. Residues asparagine 58, asparagine 128, asparagine 160, and asparagine 340 are each glycosylated (N-linked (GlcNAc...) asparagine). Positions leucine 388–aspartate 451 constitute a Thioredoxin domain. Basic and acidic residues-rich tracts occupy residues glutamate 522–proline 531 and asparagine 540–glutamate 559. Residues glutamate 522–leucine 583 are disordered. Residue asparagine 540 is glycosylated (N-linked (GlcNAc...) asparagine). The span at glutamine 573–leucine 583 shows a compositional bias: basic residues. The Prevents secretion from ER signature appears at lysine 580–leucine 583.

Belongs to the protein disulfide isomerase family. Homodimer. The homodimer is not disulfide-linked. Interacts with ERO1A and CLGN. Post-translationally, N-glycosylated.

It localises to the endoplasmic reticulum. Functionally, probable redox-inactive chaperone involved in spermatogenesis. This chain is Protein disulfide-isomerase-like protein of the testis (PDILT), found in Macaca fascicularis (Crab-eating macaque).